A 1499-amino-acid chain; its full sequence is Tyrosine-protein phosphatase non-receptor type 23 (1499 aa).

The BRO1 domain maps to 1-219 (LNVNLMLGQA…AKIEDKNEVL (219 aa)). 2 TPR repeats span residues 75 to 108 (AVAH…LNEA) and 199 to 232 (EEKA…DPDT). 3 coiled-coil regions span residues 278–305 (EASL…LGQA), 377–464 (KAVL…NVQY), and 506–537 (YADL…LLDR). Disordered regions lie at residues 536–583 (DREL…MMAG) and 718–1006 (HMAL…LLQP). The interval 598-993 (HFSPGPFPGS…SSSPESQHGG (396 aa)) is his. The segment covering 724-752 (GPAPAPPQPCFPVPQPVPQSVPQPQPLPT) has biased composition (pro residues). The segment covering 754-763 (YTYSIGTKQH) has biased composition (polar residues). An Omega-N-methylarginine modification is found at Arg785. Pro residues-rich tracts occupy residues 785 to 827 (RIGP…PQPQ), 856 to 866 (LTPPPPYPFTP), 900 to 909 (FPSPGPPHPH), and 934 to 972 (GPPP…PPPC). 20 tandem repeats follow at residues 788-789 (PQ), 790-791 (PP), 792-793 (PQ), 794-795 (LQ), 796-797 (PQ), 798-799 (PQ), 800-801 (PQ), 802-803 (PQ), 804-805 (PQ), 806-807 (PP), 808-809 (PQ), 810-811 (PQ), 812-813 (PQ), 814-815 (PQ), 816-817 (PQ), 818-819 (PQ), 820-821 (PQ), 822-823 (PQ), 824-825 (PQ), and 826-827 (PQ). Residues 788–827 (PQPPPQLQPQPQPQPQPQPPPQPQPQPQPQPQPQPQPQPQ) form a 20 X 2 AA approximate tandem repeats of P-Q region. Phosphoserine is present on residues Ser985 and Ser986. A Phosphothreonine modification is found at Thr994. Positions 1055 to 1315 (DAVWRELQEA…KFCHEALVRH (261 aa)) constitute a Tyrosine-protein phosphatase domain. Cys1255 serves as the catalytic Phosphocysteine intermediate. Disordered regions lie at residues 1322–1351 (RHGV…QDLV) and 1381–1499 (ASLP…LNKT). The segment covering 1335-1348 (MSVSQKSHLPQDSQ) has biased composition (polar residues). Positions 1390 to 1419 (PGLPPASLPEPTPAPPSSPPPPSSPLPEPP) are enriched in pro residues. Residues 1427–1450 (VPEAPSLGPPSSSLELLASLTPEA) are compositionally biased toward low complexity. Polar residues predominate over residues 1464–1473 (SKQNFLQAHN). An Omega-N-methylarginine modification is found at Arg1478. Residues 1482–1499 (PTDDPLSLLDPLWTLNKT) are compositionally biased toward low complexity.

Belongs to the protein-tyrosine phosphatase family. Non-receptor class subfamily. As to quaternary structure, interacts with GRAP2 and GRB2. Interacts with UBAP1 and CHMP4B. As to expression, ubiquitously expressed, with highest levels in brain, testis and kidney, and lowest levels in skeletal muscle.

The protein resides in the nucleus. The protein localises to the cytoplasm. It localises to the cytoplasmic vesicle. Its subcellular location is the endosome. It is found in the cytoskeleton. The protein resides in the cilium basal body. The enzyme catalyses O-phospho-L-tyrosyl-[protein] + H2O = L-tyrosyl-[protein] + phosphate. Plays a role in sorting of endocytic ubiquitinated cargos into multivesicular bodies (MVBs) via its interaction with the ESCRT-I complex (endosomal sorting complex required for transport I), and possibly also other ESCRT complexes. May act as a negative regulator of Ras-mediated mitogenic activity. Plays a role in ciliogenesis. The protein is Tyrosine-protein phosphatase non-receptor type 23 (Ptpn23) of Rattus norvegicus (Rat).